The following is a 145-amino-acid chain: Putative pre-16S rRNA nuclease (145 aa).

This sequence belongs to the YqgF nuclease family.

The protein localises to the cytoplasm. In terms of biological role, could be a nuclease involved in processing of the 5'-end of pre-16S rRNA. This chain is Putative pre-16S rRNA nuclease, found in Pseudomonas fluorescens (strain SBW25).